A 1622-amino-acid chain; its full sequence is Ferredoxin-dependent glutamate synthase 1, chloroplastic/mitochondrial (1622 aa).

Residues 1–105 (MAMQSLSPVP…LEDILSERGA (105 aa)) constitute a chloroplast and mitochondrion transit peptide. Cys-106 serves as the catalytic For GATase activity. One can recognise a Glutamine amidotransferase type-2 domain in the interval 106-505 (CGVGFIANLD…PGMMIAVDLV (400 aa)). An FMN-binding site is contributed by 1184-1241 (LTETHQTLIANGLRERVILRVDGGLKSGVDVLMAAAMGADEYGFGSLAMIATGCVMAR). The [3Fe-4S] cluster site is built by Cys-1237, Cys-1243, and Cys-1248.

The protein belongs to the glutamate synthase family. As to quaternary structure, interacts with SHM1. Requires [3Fe-4S] cluster as cofactor. FAD is required as a cofactor. It depends on FMN as a cofactor. As to expression, highly expressed in leaves. High expression in the leaf mesophyll and phloem companion cell-sieve element complex.

It localises to the plastid. Its subcellular location is the chloroplast stroma. The protein localises to the mitochondrion matrix. The catalysed reaction is 2 oxidized [2Fe-2S]-[ferredoxin] + 2 L-glutamate = L-glutamine + 2 reduced [2Fe-2S]-[ferredoxin] + 2-oxoglutarate + 2 H(+). It participates in amino-acid biosynthesis; L-glutamate biosynthesis via GLT pathway; L-glutamate from 2-oxoglutarate and L-glutamine (ferredoxin route): step 1/1. Its pathway is energy metabolism; nitrogen metabolism. In terms of biological role, involved in glutamate biosynthesis in leaf. Required for the reassimilation of ammonium ions generated during photorespiration. The polypeptide is Ferredoxin-dependent glutamate synthase 1, chloroplastic/mitochondrial (Arabidopsis thaliana (Mouse-ear cress)).